Here is a 431-residue protein sequence, read N- to C-terminus: Serine/threonine-protein kinase PknA (431 aa).

At 1 to 339 the chain is on the cytoplasmic side; sequence MSPRVGVTLS…RRTFSSGQRA (339 aa). The region spanning 13-272 is the Protein kinase domain; that stretch reads YRLQRLIATG…SGGPFADAVA (260 aa). ATP contacts are provided by residues 19-27 and lysine 42; that span reads IATGGMGQV. Residue aspartate 141 is the Proton acceptor of the active site. A disordered region spans residues 276–333; sequence AGRRPPRPSQTPPPGRAAPAAIPSGTTARVAANSAGRTAASRRSRPATGGHRPPRRTF. A compositionally biased stretch (pro residues) spans 282–291; sequence RPSQTPPPGR. Residues 292 to 314 are compositionally biased toward low complexity; sequence AAPAAIPSGTTARVAANSAGRTA. The helical transmembrane segment at 340 to 360 threads the bilayer; that stretch reads LLWAAGVLGALAIIIAVLLVI. At 361–431 the chain is on the extracellular side; that stretch reads KAPGDNSPQQ…ASLARYEIAQ (71 aa). A disordered region spans residues 366–418; the sequence is NSPQQAPTPTVTTTGNPPASNTGGTDASPRLNWTERGETRHSGLQSWVVPPTP. Over residues 368 to 384 the composition is skewed to low complexity; the sequence is PQQAPTPTVTTTGNPPA.

Belongs to the protein kinase superfamily. Ser/Thr protein kinase family. Post-translationally, autophosphorylated.

The protein resides in the cell membrane. The catalysed reaction is L-seryl-[protein] + ATP = O-phospho-L-seryl-[protein] + ADP + H(+). It carries out the reaction L-threonyl-[protein] + ATP = O-phospho-L-threonyl-[protein] + ADP + H(+). Its function is as follows. Protein kinase that regulates many aspects of mycobacterial physiology. Is a key component of a signal transduction pathway that regulates cell growth, cell shape and cell division via phosphorylation of target proteins. The sequence is that of Serine/threonine-protein kinase PknA (pknA) from Mycobacterium bovis (strain ATCC BAA-935 / AF2122/97).